Here is a 95-residue protein sequence, read N- to C-terminus: Large ribosomal subunit protein bL27 (95 aa).

Positions M1–F12 are excised as a propeptide. A disordered region spans residues G17 to S37.

The protein belongs to the bacterial ribosomal protein bL27 family. Post-translationally, the N-terminus is cleaved by ribosomal processing cysteine protease Prp.

The protein is Large ribosomal subunit protein bL27 of Malacoplasma penetrans (strain HF-2) (Mycoplasma penetrans).